Consider the following 822-residue polypeptide: Probable phosphoketolase (822 aa).

The protein belongs to the XFP family. Thiamine diphosphate serves as cofactor.

This is Probable phosphoketolase from Nocardia farcinica (strain IFM 10152).